The chain runs to 253 residues: Indole-3-glycerol phosphate synthase (253 aa).

Belongs to the TrpC family.

It catalyses the reaction 1-(2-carboxyphenylamino)-1-deoxy-D-ribulose 5-phosphate + H(+) = (1S,2R)-1-C-(indol-3-yl)glycerol 3-phosphate + CO2 + H2O. The protein operates within amino-acid biosynthesis; L-tryptophan biosynthesis; L-tryptophan from chorismate: step 4/5. The sequence is that of Indole-3-glycerol phosphate synthase from Bacillus thuringiensis (strain Al Hakam).